The following is a 1532-amino-acid chain: Glycogen debranching enzyme (1532 aa).

Position 64 is a phosphoserine (serine 64). Residues aspartate 526, histidine 529, and aspartate 627 contribute to the active site.

It belongs to the glycogen debranching enzyme family. Monomer. Interacts with NHLRC1/malin. In terms of processing, the N-terminus is blocked. Post-translationally, ubiquitinated. As to expression, liver, kidney and lymphoblastoid cells express predominantly isoform 1; whereas muscle and heart express not only isoform 1, but also muscle-specific isoform mRNAs (isoforms 2, 3 and 4). Isoforms 5 and 6 are present in both liver and muscle.

The protein localises to the cytoplasm. The catalysed reaction is Transfers a segment of a (1-&gt;4)-alpha-D-glucan to a new position in an acceptor, which may be glucose or a (1-&gt;4)-alpha-D-glucan.. The enzyme catalyses Hydrolysis of (1-&gt;6)-alpha-D-glucosidic branch linkages in glycogen phosphorylase limit dextrin.. Multifunctional enzyme acting as 1,4-alpha-D-glucan:1,4-alpha-D-glucan 4-alpha-D-glycosyltransferase and amylo-1,6-glucosidase in glycogen degradation. This Homo sapiens (Human) protein is Glycogen debranching enzyme (AGL).